The primary structure comprises 395 residues: MTLSPTTADKFTFGLWTVGWTGADPFGVATRAALDPVEAVHKLSELGAYGITFHDNDLVPFDAPASERELILKNFRAALADTGLKVPMVTTNLFSHPVFKDGGFTSNDRSVRRFALSKVLRNIDLAAELGAETFVMWGGREGSEYDGSKDLAAALDRMKEGVDTAAGYIKDKGYNLRIALEPKPNEPRGDIFLPTVGHGLAFIAQLEHGDIVGLNPETGHEQMAGLNFTHGIAQALWAGKLFHIDLNGQRGIKYDQDLVFGHGDLTSAFFTVDLLENGFPGGGPKYDGPRHFDYKPSRTDGYDGVWESAKANMAMYLLLKERALAFRADPEVQEALAASGVFELGEPTLNAGETTADLLADAASFEDFDADKAAERSFAFVRLNQLAIEHLLNAR.

Residues H54 and D57 contribute to the active site. Mg(2+)-binding residues include E181, E217, H220, D245, D255, D257, and D293.

This sequence belongs to the xylose isomerase family. In terms of assembly, homotetramer. Mg(2+) serves as cofactor.

The protein resides in the cytoplasm. It catalyses the reaction alpha-D-xylose = alpha-D-xylulofuranose. The protein is Xylose isomerase of Pseudarthrobacter chlorophenolicus (strain ATCC 700700 / DSM 12829 / CIP 107037 / JCM 12360 / KCTC 9906 / NCIMB 13794 / A6) (Arthrobacter chlorophenolicus).